Here is a 605-residue protein sequence, read N- to C-terminus: Poly(3-hydroxyalkanoate) polymerase (605 aa).

The AB hydrolase-1 domain maps to isoleucine 319 to glycine 527. Residue cysteine 341 is part of the active site.

This sequence belongs to the PHA/PHB synthase family.

The protein resides in the cytoplasm. The protein is Poly(3-hydroxyalkanoate) polymerase (phaC) of Methylorubrum extorquens (Methylobacterium dichloromethanicum).